Reading from the N-terminus, the 269-residue chain is Shikimate dehydrogenase (NADP(+)) (269 aa).

Residues Ser17 to Ser19 and Thr64 contribute to the shikimate site. The active-site Proton acceptor is the Lys68. Asp80 lines the NADP(+) pocket. Shikimate-binding residues include Asn89 and Asp105. NADP(+) is bound by residues Gly130–Ala134, Asn154–Lys159, and Met213. Tyr215 contacts shikimate. NADP(+) is bound at residue Gly237.

The protein belongs to the shikimate dehydrogenase family. Homodimer.

The catalysed reaction is shikimate + NADP(+) = 3-dehydroshikimate + NADPH + H(+). It participates in metabolic intermediate biosynthesis; chorismate biosynthesis; chorismate from D-erythrose 4-phosphate and phosphoenolpyruvate: step 4/7. Involved in the biosynthesis of the chorismate, which leads to the biosynthesis of aromatic amino acids. Catalyzes the reversible NADPH linked reduction of 3-dehydroshikimate (DHSA) to yield shikimate (SA). The chain is Shikimate dehydrogenase (NADP(+)) from Neisseria gonorrhoeae (strain ATCC 700825 / FA 1090).